A 207-amino-acid chain; its full sequence is Urease accessory protein UreG (207 aa).

GTP is bound at residue 13–20 (GPVGSGKT).

This sequence belongs to the SIMIBI class G3E GTPase family. UreG subfamily. Homodimer. UreD, UreF and UreG form a complex that acts as a GTP-hydrolysis-dependent molecular chaperone, activating the urease apoprotein by helping to assemble the nickel containing metallocenter of UreC. The UreE protein probably delivers the nickel.

The protein resides in the cytoplasm. In terms of biological role, facilitates the functional incorporation of the urease nickel metallocenter. This process requires GTP hydrolysis, probably effectuated by UreG. This chain is Urease accessory protein UreG, found in Azoarcus sp. (strain BH72).